Reading from the N-terminus, the 846-residue chain is Homeodomain-interacting protein kinase 1 (846 aa).

A disordered region spans residues 47–74 (NPFSIQKAPGTSSDNEQRAPKRRADEEA). Positions 61-72 (NEQRAPKRRADE) are enriched in basic and acidic residues. Residues 147 to 483 (YEVLEFLGKG…PAEGLESKFV (337 aa)) form the Protein kinase domain. ATP contacts are provided by residues 153 to 161 (LGKGTFGQV) and Lys-176. Asp-272 functions as the Proton acceptor in the catalytic mechanism. Residues 741 to 790 (LAAQPKKNSPAPSVITLSSDEDSNGAGSSNSGSTTRTGAVNPVRNDTLPM) are disordered. Positions 746–757 (KKNSPAPSVITL) are enriched in polar residues. The segment covering 764 to 773 (NGAGSSNSGS) has biased composition (low complexity).

It belongs to the protein kinase superfamily. CMGC Ser/Thr protein kinase family. HIPK subfamily. As to expression, broadly expressed during embryogenesis. Expression becomes more restricted during larval development. L3 larvae display robust expression in many head and motor neurons, and lower levels of expression in the intestine and the seam cells of the hypodermis. By late L4 stage, expression is largely restricted to neurons and is maintained in nerve cells of the head and nerve cord during adulthood. Expressed in adult pharyngeal cells, hypodermal cells, gonadal sheath cells and distal tip cells but not in germline cells. Expressed in serotonergic neurons such as ADF and NSM and in GABAergic neurons, including RME, RIS and DVB.

The protein localises to the nucleus. It carries out the reaction L-seryl-[protein] + ATP = O-phospho-L-seryl-[protein] + ADP + H(+). The enzyme catalyses L-threonyl-[protein] + ATP = O-phospho-L-threonyl-[protein] + ADP + H(+). Serine/threonine-protein kinase required in the somatic gonadal cells to regulate germline proliferation during larval development and in adulthood. Plays a role in the development/differentiation of gonadal distal tip cells. Required for normal lifespan in a pha-4 and mxl-2-dependent manner. Also contributes to survival following heat or oxidative stress. Prevents sumoylation and inactivation of heat shock transcription factor hsf-1 which enhances hsf-1-dependent transcriptional induction of chaperones in response to heat shock. Also required for hormetic extension of longevity in response to heat stress. Also contributes to longevity by promoting autophagy under nutrient stress conditions through induction of autophagosome formation and autophagy gene expression. Provides protection against proteotoxic polyglutamine aggregate and the associated locomotory toxicity, probably as a result of kinase activity. Contributes to longevity via gamma-aminobutyric acid (GABA)ergic signaling by promoting autophagy through mxl-2, hlh-30 and daf-16 but independent of hsf-1 and phas-4, to induce autophagosome formation and the expression of autophagy genes. Promotes thermotolerance via serotonergic signaling by serotonergic neurons. Preserves neuronal function in aging animals by mitigating against age-associated decline in axonal and synaptic transmissions. Acts as an activator of nhr-49-dependent hypoxia response, including the up-regulation of fmo-2 and acs-2, the induction of autophagosome formation and expression of autophagy genes. This Caenorhabditis elegans protein is Homeodomain-interacting protein kinase 1.